We begin with the raw amino-acid sequence, 126 residues long: Small ribosomal subunit protein eS6 (126 aa).

It belongs to the eukaryotic ribosomal protein eS6 family.

The protein is Small ribosomal subunit protein eS6 of Nanoarchaeum equitans (strain Kin4-M).